Consider the following 224-residue polypeptide: Imidazoleglycerol-phosphate dehydratase (224 aa).

The protein belongs to the imidazoleglycerol-phosphate dehydratase family.

The enzyme catalyses D-erythro-1-(imidazol-4-yl)glycerol 3-phosphate = 3-(imidazol-4-yl)-2-oxopropyl phosphate + H2O. It functions in the pathway amino-acid biosynthesis; L-histidine biosynthesis; L-histidine from 5-phospho-alpha-D-ribose 1-diphosphate: step 6/9. The sequence is that of Imidazoleglycerol-phosphate dehydratase (HIS3) from Komagataella pastoris (Yeast).